The sequence spans 344 residues: L-threonine 3-dehydrogenase (344 aa).

C42 is a binding site for Zn(2+). Catalysis depends on charge relay system residues T44 and H47. Residues H67, E68, C97, C100, C103, and C111 each contribute to the Zn(2+) site. NAD(+) is bound by residues I179, D199, R204, 266 to 268, and 290 to 291; these read LGI and IY.

Belongs to the zinc-containing alcohol dehydrogenase family. As to quaternary structure, homotetramer. The cofactor is Zn(2+).

Its subcellular location is the cytoplasm. It carries out the reaction L-threonine + NAD(+) = (2S)-2-amino-3-oxobutanoate + NADH + H(+). Its pathway is amino-acid degradation; L-threonine degradation via oxydo-reductase pathway; glycine from L-threonine: step 1/2. In terms of biological role, catalyzes the NAD(+)-dependent oxidation of L-threonine to 2-amino-3-ketobutyrate. The sequence is that of L-threonine 3-dehydrogenase from Chelativorans sp. (strain BNC1).